The primary structure comprises 482 residues: tRNA sulfurtransferase (482 aa).

One can recognise a THUMP domain in the interval 61-165 (LVIRDALTRI…DDRLLLIKGR (105 aa)). ATP is bound by residues 183 to 184 (LI), Lys-265, Gly-287, and Gln-296. Cys-344 and Cys-456 are joined by a disulfide. The 79-residue stretch at 404–482 (FGPNDVILDI…GFANVKVYRP (79 aa)) folds into the Rhodanese domain. Residue Cys-456 is the Cysteine persulfide intermediate of the active site.

It belongs to the ThiI family.

The protein localises to the cytoplasm. The enzyme catalyses [ThiI sulfur-carrier protein]-S-sulfanyl-L-cysteine + a uridine in tRNA + 2 reduced [2Fe-2S]-[ferredoxin] + ATP + H(+) = [ThiI sulfur-carrier protein]-L-cysteine + a 4-thiouridine in tRNA + 2 oxidized [2Fe-2S]-[ferredoxin] + AMP + diphosphate. The catalysed reaction is [ThiS sulfur-carrier protein]-C-terminal Gly-Gly-AMP + S-sulfanyl-L-cysteinyl-[cysteine desulfurase] + AH2 = [ThiS sulfur-carrier protein]-C-terminal-Gly-aminoethanethioate + L-cysteinyl-[cysteine desulfurase] + A + AMP + 2 H(+). It participates in cofactor biosynthesis; thiamine diphosphate biosynthesis. Its function is as follows. Catalyzes the ATP-dependent transfer of a sulfur to tRNA to produce 4-thiouridine in position 8 of tRNAs, which functions as a near-UV photosensor. Also catalyzes the transfer of sulfur to the sulfur carrier protein ThiS, forming ThiS-thiocarboxylate. This is a step in the synthesis of thiazole, in the thiamine biosynthesis pathway. The sulfur is donated as persulfide by IscS. The polypeptide is tRNA sulfurtransferase (Salmonella typhimurium (strain LT2 / SGSC1412 / ATCC 700720)).